We begin with the raw amino-acid sequence, 503 residues long: Transforming protein rel polyprotein (503 aa).

In terms of domain architecture, RHD spans 16-305; sequence PYIEIFEQPR…GNKAKRQRST (290 aa). The residue at position 275 (serine 275) is a Phosphoserine; by host PKA. Disordered stretches follow at residues 286–306 and 318–342; these read RYLP…RSTL and AVTE…KEPN. The Nuclear localization signal motif lies at 298–303; it reads KAKRQR.

Its subcellular location is the host cytoplasm. Functionally, this transforming protein appears to have a protein-kinase activity. In Galliformes, this protein is Transforming protein rel polyprotein (V-REL).